Reading from the N-terminus, the 177-residue chain is MASSINGNGFITTTVDELLSWGRRNALWPVTIGLACCAIEMMHAAASRFDIDRLGMIFRASPRQADVLIVAGTVVNKVAPMLKLVWDQMPEPKWCISMGGCASAGGPFPTYSTLQGIDRIIPVDVYIPGCPPTPQGLIYGLLELQRKIREKKVTRYEKAFEEFKKDLSPELLNGVGV.

[4Fe-4S] cluster contacts are provided by C36, C37, C101, and C130.

The protein belongs to the complex I 20 kDa subunit family. NDH-1 is composed of 14 different subunits. Subunits NuoB, C, D, E, F, and G constitute the peripheral sector of the complex. Requires [4Fe-4S] cluster as cofactor.

It is found in the cell inner membrane. It carries out the reaction a quinone + NADH + 5 H(+)(in) = a quinol + NAD(+) + 4 H(+)(out). Functionally, NDH-1 shuttles electrons from NADH, via FMN and iron-sulfur (Fe-S) centers, to quinones in the respiratory chain. The immediate electron acceptor for the enzyme in this species is believed to be ubiquinone. Couples the redox reaction to proton translocation (for every two electrons transferred, four hydrogen ions are translocated across the cytoplasmic membrane), and thus conserves the redox energy in a proton gradient. This Hydrogenobaculum sp. (strain Y04AAS1) protein is NADH-quinone oxidoreductase subunit B.